A 506-amino-acid polypeptide reads, in one-letter code: Hippocampus abundant transcript-like protein 1 (506 aa).

A disordered region spans residues 1–25 (MSVEPPPELEEKAASEPEAGAMPEK). Residues 1 to 49 (MSVEPPPELEEKAASEPEAGAMPEKRAGAQAAGSTWLQGFGRPSVYHAA) lie on the Extracellular side of the membrane. Residues 50 to 70 (IVIFLEFFAWGLLTTPMLTVL) form a helical membrane-spanning segment. The Cytoplasmic segment spans residues 71–82 (HETFSQHTFLMN). A helical membrane pass occupies residues 83–103 (GLIQGVKGLLSFLSAPLIGAL). Residues 104-111 (SDVWGRKP) lie on the Extracellular side of the membrane. A helical membrane pass occupies residues 112-132 (FLLGTVFFTCFPIPLMRISPW). Residues 133-134 (WY) lie on the Cytoplasmic side of the membrane. The chain crosses the membrane as a helical span at residues 135–155 (FAMISVSGVFSVTFSVIFAYV). The Extracellular segment spans residues 156–168 (ADVTQEHERSTAY). Residues 169 to 189 (GWVSATFAASLVSSPAIGAYL) form a helical membrane-spanning segment. Topologically, residues 190 to 196 (SASYGDS) are cytoplasmic. Residues 197-217 (LVVLVATVVALLDICFILVAV) traverse the membrane as a helical segment. At 218 to 255 (PESLPEKMRPVSWGAQISWKQADPFASLKKVGKDSTVL) the chain is on the extracellular side. A helical membrane pass occupies residues 256 to 276 (LICITVFLSYLPEAGQYSSFF). Residues 277-281 (LYLRQ) are Cytoplasmic-facing. A helical transmembrane segment spans residues 282 to 302 (VIGFGSVKIAAFIAMVGILSI). At 303 to 319 (VAQTAFLSILMRSLGNK) the chain is on the extracellular side. A helical membrane pass occupies residues 320 to 340 (NTVLLGLGFQMLQLAWYGFGS). Glutamine 341 is a topological domain (cytoplasmic). Residues 342 to 362 (AWMMWAAGTVAAMSSITFPAI) traverse the membrane as a helical segment. At 363–387 (SALVSRNAESDQQGVAQGIITGIRG) the chain is on the extracellular side. The chain crosses the membrane as a helical span at residues 388–408 (LCNGLGPALYGFIFYMFHVEL). Over 409–428 (TELGPKLNSNNVPLQGAVIP) the chain is Cytoplasmic. A helical transmembrane segment spans residues 429–449 (GPPFLFGACIVLMSFLVALFI). Residues 450–506 (PEYSKASGVQKHSNSSSGSLTNTPERGSDEDIEPLLQDSSIWELSSFEEPGNQCTEL) lie on the Extracellular side of the membrane. The tract at residues 457–481 (GVQKHSNSSSGSLTNTPERGSDEDI) is disordered. Residues 459 to 474 (QKHSNSSSGSLTNTPE) are compositionally biased toward polar residues. Asparagine 463 carries an N-linked (GlcNAc...) asparagine glycan.

This sequence belongs to the major facilitator superfamily.

It is found in the membrane. This Homo sapiens (Human) protein is Hippocampus abundant transcript-like protein 1.